Consider the following 490-residue polypeptide: MRINPTTYGSEISLIEKKNRGRIVQIIGPVLDVAFPPGKMPNIYNALVVKGRDTEQMNVTCEVQQLLGNNRVRAVAMNDTDGLMRGMEVIDMGTPITVPVGGSTLGRIFNVLGEPVDNFGPVDTNTTSTIHRSAPAFIQLDTKLSIFETGIKVVDLLAPYRRGGKIGLFGGAGVGKTVLIMELINNIAKAHGGVSVFGGVGERTREGNDLYMEMKESGVINEKNITESKVALVYGQMNEPPGARMRVGLTALTMAEYFRDVNEQDVLLFIDNIFRFVQAGSEVSALLGRMPSAVGYQPTLSTEMGSLQERITSTKEGSITSIQAVYVPADDLTDPAPATTFAHLDATTVLSRGLAAKGIYPAVDPLDSTSMMLQPRIVGEEHYETAQKVKQTLQRYKELQDIIAILGLDELSEEDRLTVARARKIERFLSQPFFVAEVFTGSPGKYVGLAETIRGFNLILSGELDSLPEQAFYLVGNIDEATKKAMDLKT.

170 to 177 (GGAGVGKT) serves as a coordination point for ATP.

Belongs to the ATPase alpha/beta chains family. As to quaternary structure, F-type ATPases have 2 components, CF(1) - the catalytic core - and CF(0) - the membrane proton channel. CF(1) has five subunits: alpha(3), beta(3), gamma(1), delta(1), epsilon(1). CF(0) has four main subunits: a(1), b(1), b'(1) and c(9-12).

Its subcellular location is the plastid membrane. It carries out the reaction ATP + H2O + 4 H(+)(in) = ADP + phosphate + 5 H(+)(out). Functionally, produces ATP from ADP in the presence of a proton gradient across the membrane. The catalytic sites are hosted primarily by the beta subunits. This chain is ATP synthase subunit beta, plastid, found in Cuscuta exaltata (Tall dodder).